Consider the following 267-residue polypeptide: Eukaryotic translation initiation factor 3 subunit K (267 aa).

Positions 46 to 233 constitute a PCI domain; the sequence is FDCYANLALL…EARSEVKSER (188 aa).

This sequence belongs to the eIF-3 subunit K family. As to quaternary structure, component of the eukaryotic translation initiation factor 3 (eIF-3) complex.

The protein resides in the cytoplasm. Functionally, component of the eukaryotic translation initiation factor 3 (eIF-3) complex, which is involved in protein synthesis of a specialized repertoire of mRNAs and, together with other initiation factors, stimulates binding of mRNA and methionyl-tRNAi to the 40S ribosome. The eIF-3 complex specifically targets and initiates translation of a subset of mRNAs involved in cell proliferation. The sequence is that of Eukaryotic translation initiation factor 3 subunit K from Aspergillus niger (strain ATCC MYA-4892 / CBS 513.88 / FGSC A1513).